The chain runs to 83 residues: MLKSFLIFLVRFYQKNISPAFPASCRYRPTCSTYMIEAIQKHGLKGVLMGIARILRCHPLAHGGNDPVPDHFSLRRNKTDISD.

A disordered region spans residues 63 to 83 (GGNDPVPDHFSLRRNKTDISD). Over residues 68–83 (VPDHFSLRRNKTDISD) the composition is skewed to basic and acidic residues.

This sequence belongs to the UPF0161 family.

It localises to the cell membrane. Functionally, could be involved in insertion of integral membrane proteins into the membrane. The protein is Putative membrane protein insertion efficiency factor of Streptococcus agalactiae serotype Ia (strain ATCC 27591 / A909 / CDC SS700).